The sequence spans 327 residues: MGATGDTGGPRPGTESRRPGNVGNAGAAGQPVLTNPWNIMIKPRQVQRRGRRSQMTTSFTDPAISMDLLRAVLQPSINEEIQSVFNKYMKFFQKAALNVRDNVGEEVDAEQLIQEACRSCVEQAKLLFSDGEKVIPRLAHELPGIKRGRQAEEESHREAPFPKRGKVGLPGHVLSNDRAAAGMVWKPKSCEPIRREGPKWDPARLNESTTFVLGSRANKALGMGGTRGRIYIKHPHLFKYAADPQDKHWLAEQHHMRATGGKMAYLLIEEDIRDLAASDDYRGCLDLKLEELKSFVLPSWMVEKMRKYMETLRTENEHRAAEATPQT.

The segment covering 1-11 has biased composition (gly residues); it reads MGATGDTGGPR. Disordered regions lie at residues 1–34 and 146–172; these read MGATGDTGGPRPGTESRRPGNVGNAGAAGQPVLT and KRGRQAEEESHREAPFPKRGKVGLPGH. The tract at residues 55 to 146 is important for dimerization; sequence MTTSFTDPAI…RLAHELPGIK (92 aa). The span at 146–161 shows a compositional bias: basic and acidic residues; that stretch reads KRGRQAEEESHREAPF. A DNA-binding region (a.T hook) is located at residues 157–171; sequence REAPFPKRGKVGLPG. Residues 162 to 168 carry the Nuclear localization signal motif; the sequence is PKRGKVG. Residues 195–314 form an important for DNA and nucleosome binding region; that stretch reads REGPKWDPAR…MRKYMETLRT (120 aa). Residues 214–235 constitute a DNA-binding region (H-T-H motif); the sequence is GSRANKALGMGGTRGRIYIKHP.

In terms of assembly, monomer and homodimer. A minor proportion may form homotrimers. Interacts with ZNF541. Interacts with the terminal deoxynucleotidyltransferase DNTT. Interacts with TRERF1. Identified in a histone deacetylase complex that contains DNTTIP1, HDAC1 and MIDEAS; this complex assembles into a tetramer that contains four copies of each protein chain. Component of a histone deacetylase complex containing DNTTIP1, ZNF541, HDAC1 and HDAC2. Identified in a complex with KCTD19, HDAC1, HDAC2 and ZNF541. In terms of tissue distribution, expressed in thymus, bone marrow and spleen.

The protein localises to the nucleus. Increases DNTT terminal deoxynucleotidyltransferase activity (in vitro). Also acts as a transcriptional regulator, binding to the consensus sequence 5'-GNTGCATG-3' following an AT-tract. Associates with RAB20 promoter and positively regulates its transcription. Binds DNA and nucleosomes; may recruit HDAC1 complexes to nucleosomes or naked DNA. The protein is Deoxynucleotidyltransferase terminal-interacting protein 1 (Dnttip1) of Rattus norvegicus (Rat).